We begin with the raw amino-acid sequence, 444 residues long: Protein CPn_0808/CP_1063/CPj0808/CpB0837 (444 aa).

A compositionally biased stretch (polar residues) spans 1 to 13; sequence MTSGVSGSSSQDP. The disordered stretch occupies residues 1-124; it reads MTSGVSGSSS…NNYDSPSLPT (124 aa). Low complexity predominate over residues 15–24; the sequence is LAAQLAQSSQ. Polar residues predominate over residues 25–42; it reads KAGNAQSGHDTKNVTKQG. Residues 77–86 are compositionally biased toward basic and acidic residues; sequence SKGEKSEKSG. Residues 88 to 103 show a composition bias toward low complexity; that stretch reads SKSSTSVASASETATA. The segment covering 113–124 has biased composition (polar residues); that stretch reads RQNNYDSPSLPT.

This sequence belongs to the chlamydial CPn_0808/CT_579/TC_0868 family.

This is Protein CPn_0808/CP_1063/CPj0808/CpB0837 from Chlamydia pneumoniae (Chlamydophila pneumoniae).